The sequence spans 280 residues: Large ribosomal subunit protein uL2 (280 aa).

The segment at 229 to 280 (DHPHGGGEGKAPIGHPSPLTPWGKPTLGYKTRKKRKPSDRFIIQRANDKKEK) is disordered.

The protein belongs to the universal ribosomal protein uL2 family. As to quaternary structure, part of the 50S ribosomal subunit. Forms a bridge to the 30S subunit in the 70S ribosome.

In terms of biological role, one of the primary rRNA binding proteins. Required for association of the 30S and 50S subunits to form the 70S ribosome, for tRNA binding and peptide bond formation. It has been suggested to have peptidyltransferase activity; this is somewhat controversial. Makes several contacts with the 16S rRNA in the 70S ribosome. The sequence is that of Large ribosomal subunit protein uL2 from Dictyoglomus turgidum (strain DSM 6724 / Z-1310).